The chain runs to 161 residues: Ferric uptake regulation protein 1 (161 aa).

C94 and C97 together coordinate Zn(2+).

It belongs to the Fur family.

Its subcellular location is the cytoplasm. Acts as a global negative controlling element, employing Fe(2+) as a cofactor to bind the operator of the repressed genes. This chain is Ferric uptake regulation protein 1 (fur1), found in Mycolicibacterium fortuitum (Mycobacterium fortuitum).